A 482-amino-acid chain; its full sequence is Ribosomal protein uS12 methylthiotransferase RimO (482 aa).

The region spanning 2 to 115 is the MTTase N-terminal domain; the sequence is MKVHIITLGC…IAEVVETFQP (114 aa). 6 residues coordinate [4Fe-4S] cluster: Cys11, Cys47, Cys79, Cys177, Cys181, and Cys184. One can recognise a Radical SAM core domain in the interval 163-394; that stretch reads RAVGPSAYLK…MRLQQRISRE (232 aa). The TRAM domain occupies 397–466; it reads RRWLGRVVRV…DYDLWGDVVG (70 aa).

It belongs to the methylthiotransferase family. RimO subfamily. [4Fe-4S] cluster serves as cofactor.

The protein localises to the cytoplasm. It carries out the reaction L-aspartate(89)-[ribosomal protein uS12]-hydrogen + (sulfur carrier)-SH + AH2 + 2 S-adenosyl-L-methionine = 3-methylsulfanyl-L-aspartate(89)-[ribosomal protein uS12]-hydrogen + (sulfur carrier)-H + 5'-deoxyadenosine + L-methionine + A + S-adenosyl-L-homocysteine + 2 H(+). Its function is as follows. Catalyzes the methylthiolation of an aspartic acid residue of ribosomal protein uS12. The chain is Ribosomal protein uS12 methylthiotransferase RimO from Roseiflexus castenholzii (strain DSM 13941 / HLO8).